The sequence spans 545 residues: MATNYIFVTGGVVSSLGKGIAAASLAAILEARGLNVTIMKLDPYINVDPGTMSPTQHGEVFVTQDGAETDLDLGHYERFIRTKMTKRNNFTTGKIYSEVLRKERRGDYLGATIQVIPHITNEIKDRVIAGAQGHDVVIVEVGGTVGDIESLPFLEALRQLAVQVGREHTLFMHLTLVPYIPTAGEVKTKPTQHSVKELLSIGIQPDVLICRSDRMIPPNERAKIALFCNVAERAVISLKDVNSIYQIPALLKSQGLDDFVCERFRLTCPEADLTEWEQVLYKQANPVGEVTIGMVGKYTELPDAYKSVNEALKHAGLTNRLSVNIKYIDSQDVETKGVEVLKGIDGILVPGGFGYRGVEGKIRTAQYARENKIPYLGICLGMQIALIEYARNVAGLTKANSSEFDKDCEQPVVALITEWQDAEGNTEVRTDESDLGGTMRLGAQQCHLVSGSRARELYGKETIEERHRHRYEVNNTLLPQIEKAGLKVTGLSADKKLVEIIEVPNHPWFVACQFHPEFTSTPRDGHPLFAGFVKAAYENHKKSVK.

The amidoligase domain stretch occupies residues 1 to 266; sequence MATNYIFVTG…DDFVCERFRL (266 aa). Serine 14 serves as a coordination point for CTP. A UTP-binding site is contributed by serine 14. Residues 15 to 20 and aspartate 72 contribute to the ATP site; that span reads SLGKGI. Residues aspartate 72 and glutamate 140 each contribute to the Mg(2+) site. CTP is bound by residues 147–149, 187–192, and lysine 223; these read DIE and KTKPTQ. UTP contacts are provided by residues 187-192 and lysine 223; that span reads KTKPTQ. Position 239-241 (239-241) interacts with ATP; sequence KDV. One can recognise a Glutamine amidotransferase type-1 domain in the interval 291–542; that stretch reads TIGMVGKYTE…VKAAYENHKK (252 aa). Glycine 352 provides a ligand contact to L-glutamine. Cysteine 379 acts as the Nucleophile; for glutamine hydrolysis in catalysis. L-glutamine contacts are provided by residues 380–383, glutamate 403, and arginine 470; that span reads LGMQ. Residues histidine 515 and glutamate 517 contribute to the active site.

It belongs to the CTP synthase family. In terms of assembly, homotetramer.

It carries out the reaction UTP + L-glutamine + ATP + H2O = CTP + L-glutamate + ADP + phosphate + 2 H(+). It catalyses the reaction L-glutamine + H2O = L-glutamate + NH4(+). The enzyme catalyses UTP + NH4(+) + ATP = CTP + ADP + phosphate + 2 H(+). Its pathway is pyrimidine metabolism; CTP biosynthesis via de novo pathway; CTP from UDP: step 2/2. Allosterically activated by GTP, when glutamine is the substrate; GTP has no effect on the reaction when ammonia is the substrate. The allosteric effector GTP functions by stabilizing the protein conformation that binds the tetrahedral intermediate(s) formed during glutamine hydrolysis. Inhibited by the product CTP, via allosteric rather than competitive inhibition. Functionally, catalyzes the ATP-dependent amination of UTP to CTP with either L-glutamine or ammonia as the source of nitrogen. Regulates intracellular CTP levels through interactions with the four ribonucleotide triphosphates. The chain is CTP synthase from Haemophilus influenzae (strain ATCC 51907 / DSM 11121 / KW20 / Rd).